The following is a 4244-amino-acid chain: Tenascin-X (4244 aa).

The first 23 residues, 1–23 (MMPAQYALTSSLVLLVLLSTARA), serve as a signal peptide directing secretion. The disordered stretch occupies residues 27–57 (SSRSNVTLPAPRPPPQPGGHTVGAGVGSPSS). Asn-31 carries N-linked (GlcNAc...) asparagine glycosylation. One can recognise an EGF-like 1; incomplete domain in the interval 156-168 (CSCEPGWGGPTCS). The segment at 169–189 (DPTDAEIPPSSPPSASGSCPD) is disordered. EGF-like domains lie at 183–213 (ASGS…GPSC), 214–244 (GWPS…GPDC), 245–275 (SQRS…GDDC), 276–306 (GMRS…GEDC), 307–337 (GVRS…GEDC), 338–368 (GTRS…GEDC), 369–399 (STRT…GDDC), 400–430 (GVRS…GTDC), 431–461 (GSRA…GEDC), 462–492 (GVRS…GRDC), 493–523 (GTRA…GEDC), 524–554 (GSRR…GEDC), 555–585 (STRS…GEDC), 586–616 (GVRQ…SEDC), 617–647 (SIRT…GPTC), 648–679 (ATRM…EDCG), 684–714 (PASA…GPDC), and 715–746 (AIQT…EDCG). Disulfide bonds link Cys-187/Cys-197, Cys-191/Cys-202, Cys-204/Cys-213, Cys-218/Cys-228, Cys-222/Cys-233, Cys-235/Cys-244, Cys-249/Cys-259, Cys-253/Cys-264, Cys-266/Cys-275, Cys-280/Cys-290, Cys-284/Cys-295, Cys-297/Cys-306, Cys-311/Cys-321, Cys-315/Cys-326, Cys-328/Cys-337, Cys-342/Cys-352, Cys-346/Cys-357, Cys-359/Cys-368, Cys-373/Cys-383, Cys-377/Cys-388, Cys-390/Cys-399, Cys-404/Cys-414, Cys-408/Cys-419, Cys-421/Cys-430, Cys-435/Cys-445, Cys-439/Cys-450, Cys-452/Cys-461, Cys-466/Cys-476, Cys-470/Cys-481, Cys-483/Cys-492, Cys-497/Cys-507, Cys-501/Cys-512, Cys-514/Cys-523, Cys-528/Cys-538, Cys-532/Cys-543, Cys-545/Cys-554, Cys-559/Cys-569, Cys-563/Cys-574, Cys-576/Cys-585, Cys-590/Cys-600, Cys-594/Cys-605, Cys-607/Cys-616, Cys-621/Cys-631, Cys-625/Cys-636, Cys-638/Cys-647, Cys-652/Cys-662, Cys-656/Cys-667, Cys-669/Cys-678, Cys-688/Cys-698, Cys-692/Cys-703, Cys-705/Cys-714, Cys-719/Cys-729, Cys-723/Cys-734, and Cys-736/Cys-745. Positions 926 to 956 (TGSSPLGLLGTTDEPPPSGPSTTQGAQAPLL) are disordered. Fibronectin type-III domains lie at 959–1051 (RPQE…IMDK), 1064–1153 (RLGE…PQSD), 1161–1249 (HLGN…APER), 1263–1352 (LLGE…PQED), 1374–1468 (LLGE…TPPA), 1476–1572 (RLGE…TEAS), 1574–1669 (PPLE…RGDA), 1674–1764 (PPRL…ARSA), 1778–1868 (LGEE…REET), and 1883–1971 (HLGE…VPEE). A disordered region spans residues 1340 to 1372 (PESVVAKTAPQEDVDETPSPTELGTEAPESPEE). Residues 1666–1668 (RGD) carry the Cell attachment site motif. The segment at 1752–1777 (PLTADGTTEARSAMDDTGTKRPPKPR) is disordered. The interval 1968 to 1990 (VPEEEKPSEPPTATPEPPIKPRL) is disordered. Over residues 1976 to 1987 (EPPTATPEPPIK) the composition is skewed to pro residues. 5 Fibronectin type-III domains span residues 1989-2089 (RLGE…SMEA), 2097-2185 (LLGE…APEE), 2196-2296 (RLGQ…TEPP), 2305-2398 (RLEE…TPSP), and 2408-2502 (PPEE…PQED). The interval 2281 to 2304 (APGKDEEMAPASTEPPTPEPPIKP) is disordered. Residues 2495–2542 (GVTAPQEDVDETPSPTEPGTEAPGPPEEPLLGELTVTGSSPDSLSLSW) form a disordered region. A compositionally biased stretch (low complexity) spans 2506 to 2516 (TPSPTEPGTEA). Fibronectin type-III domains are found at residues 2519 to 2617 (PPEE…TTQA), 2625 to 2723 (PPIK…TPSP), 2733 to 2840 (PPEE…TTPE), 2841 to 2939 (PPNK…TPAP), 2949 to 3042 (PPEE…APKD), 3062 to 3153 (RLGE…TPSP), 3168 to 3260 (LLGE…TPLP), 3264 to 3355 (RLGE…TKPS), 3357 to 3446 (RLGE…PLEK), 3451 to 3544 (HLGE…TPAP), 3553 to 3647 (PPEE…LAPA), 3657 to 3754 (RLSQ…TLSP), 3758 to 3847 (SPRD…VPDG), 3848 to 3934 (PTQL…TGLE), and 3935 to 4025 (APRD…LRIP). Polar residues predominate over residues 2530–2542 (VTGSSPDSLSLSW). 2 disordered regions span residues 2824-2847 (PEDE…KPRL) and 2933-2969 (EEET…DSLS). Positions 2937–2946 (PAPTEPSTEA) are enriched in low complexity. Residues 2960–2969 (VTGSSPDSLS) show a composition bias toward polar residues. 2 disordered regions span residues 3536-3559 (APEE…EPRL) and 3636-3662 (LSAE…SQLS). Asn-3855, Asn-3908, and Asn-3920 each carry an N-linked (GlcNAc...) asparagine glycan. A Fibrinogen C-terminal domain is found at 4021–4236 (GLRIPFPRDC…FTEMKLRPRN (216 aa)). A disulfide bridge connects residues Cys-4030 and Cys-4060. N-linked (GlcNAc...) asparagine glycosylation occurs at Asn-4095. Cys-4182 and Cys-4195 form a disulfide bridge.

The protein belongs to the tenascin family. Homotrimer. Interacts with type I, III and V collagens and tropoelastin via its 29th fibronectin type-III domain. As to expression, highly expressed in fetal adrenal, in fetal testis, fetal smooth, striated and cardiac muscle. Isoform XB-short is only expressed in the adrenal gland.

The protein resides in the secreted. It localises to the extracellular space. The protein localises to the extracellular matrix. Appears to mediate interactions between cells and the extracellular matrix. Substrate-adhesion molecule that appears to inhibit cell migration. Accelerates collagen fibril formation. May play a role in supporting the growth of epithelial tumors. In Homo sapiens (Human), this protein is Tenascin-X.